The following is a 509-amino-acid chain: ATP synthase subunit alpha (509 aa).

Residue 169–176 (GDRQTGKT) participates in ATP binding.

The protein belongs to the ATPase alpha/beta chains family. As to quaternary structure, F-type ATPases have 2 components, CF(1) - the catalytic core - and CF(0) - the membrane proton channel. CF(1) has five subunits: alpha(3), beta(3), gamma(1), delta(1), epsilon(1). CF(0) has three main subunits: a(1), b(2) and c(9-12). The alpha and beta chains form an alternating ring which encloses part of the gamma chain. CF(1) is attached to CF(0) by a central stalk formed by the gamma and epsilon chains, while a peripheral stalk is formed by the delta and b chains.

The protein localises to the cell inner membrane. It catalyses the reaction ATP + H2O + 4 H(+)(in) = ADP + phosphate + 5 H(+)(out). Produces ATP from ADP in the presence of a proton gradient across the membrane. The alpha chain is a regulatory subunit. The chain is ATP synthase subunit alpha from Sinorhizobium medicae (strain WSM419) (Ensifer medicae).